A 239-amino-acid polypeptide reads, in one-letter code: Putative CRISPR-associated endoribonuclease-like protein Cas6nc (239 aa).

This sequence belongs to the CRISPR-associated protein Cas6/Cse3/CasE family. Monomer; homodimer when crystallized in the presence of crRNA. Varying the crRNA sequence varies degree of oligomerization and structure.

Its function is as follows. CRISPR (clustered regularly interspaced short palindromic repeat), is an adaptive immune system that provides protection against mobile genetic elements (viruses, transposable elements and conjugative plasmids). CRISPR clusters contain sequences complementary to antecedent mobile elements and target invading nucleic acids. CRISPR clusters are transcribed and processed into CRISPR RNA (crRNA), also called psiRNA (prokaryotic silencing) in this organism (Potential). This Pyrococcus horikoshii (strain ATCC 700860 / DSM 12428 / JCM 9974 / NBRC 100139 / OT-3) protein is Putative CRISPR-associated endoribonuclease-like protein Cas6nc (cas6nc).